The sequence spans 119 residues: Large ribosomal subunit protein bL20c (119 aa).

It belongs to the bacterial ribosomal protein bL20 family.

It localises to the plastid. It is found in the chloroplast. Functionally, binds directly to 23S ribosomal RNA and is necessary for the in vitro assembly process of the 50S ribosomal subunit. It is not involved in the protein synthesizing functions of that subunit. This chain is Large ribosomal subunit protein bL20c, found in Saccharum hybrid (Sugarcane).